Consider the following 653-residue polypeptide: 2-oxoglutarate oxidoreductase subunit KorA (653 aa).

Residues 1 to 21 (MDPNGSGAGPESHDAAFHAAP) form a disordered region. The segment covering 11-21 (ESHDAAFHAAP) has biased composition (basic and acidic residues).

In terms of assembly, KG oxidoreductase (KOR) is composed of KorA and KorB subunits.

The enzyme catalyses 2 oxidized [2Fe-2S]-[ferredoxin] + 2-oxoglutarate + CoA = succinyl-CoA + 2 reduced [2Fe-2S]-[ferredoxin] + CO2 + H(+). Its pathway is carbohydrate metabolism; tricarboxylic acid cycle. Component of KG oxidoreductase (KOR) that catalyzes the CoA-dependent oxidative decarboxylation of 2-oxoglutarate (alpha-ketoglutarate, KG) to succinyl-CoA. Methyl viologen can act as electron acceptor in vitro; the physiologic electron acceptor is unknown. Is involved in the alternative TCA pathway that functions concurrently with fatty acid beta-oxidation. Since a growing body of evidence indicates that lipids (for example cholesterol and fatty acids) are a predominant growth substrate for M.tuberculosis during infection, flux through KOR likely represents an important step in intermediary metabolism in vivo. KOR-dependent decarboxylation of KG also appears to be an important source of CO(2) in M.tuberculosis metabolism. The chain is 2-oxoglutarate oxidoreductase subunit KorA (korA) from Mycobacterium tuberculosis (strain ATCC 25618 / H37Rv).